A 416-amino-acid chain; its full sequence is Type II methyltransferase M.PspPI (416 aa).

One can recognise an SAM-dependent MTase C5-type domain in the interval 77–410; sequence YSLVELFAGA…KAIIRMLNAA (334 aa). Cys-149 is a catalytic residue.

It belongs to the class I-like SAM-binding methyltransferase superfamily. C5-methyltransferase family.

The enzyme catalyses a 2'-deoxycytidine in DNA + S-adenosyl-L-methionine = a 5-methyl-2'-deoxycytidine in DNA + S-adenosyl-L-homocysteine + H(+). A methylase, recognizes the double-stranded sequence 5'-GGNCC-3', methylates C-4 on both strands, and protects the DNA from cleavage by the PspPI endonuclease. The protein is Type II methyltransferase M.PspPI of Psychrobacter sp. (strain TA137).